We begin with the raw amino-acid sequence, 248 residues long: Protein maestro (248 aa).

Residues 1-23 (MEQTRKIPNQPLPTPTSQSKKRR) are disordered. An HEAT repeat occupies 128–163 (SFFIDITLQARTLLDDEDDSVRYSAFVLFGQLASFA).

Prominent expression seen in testis, brain, liver and heart. Weakly expressed in the kidney.

Its subcellular location is the nucleus. The protein resides in the nucleolus. In Mus musculus (Mouse), this protein is Protein maestro (Mro).